We begin with the raw amino-acid sequence, 381 residues long: N-acetyldiaminopimelate deacetylase (381 aa).

Asp-73 is a catalytic residue. Glu-132 (proton acceptor) is an active-site residue.

Belongs to the peptidase M20A family. N-acetyldiaminopimelate deacetylase subfamily.

The catalysed reaction is N-acetyl-(2S,6S)-2,6-diaminopimelate + H2O = (2S,6S)-2,6-diaminopimelate + acetate. It participates in amino-acid biosynthesis; L-lysine biosynthesis via DAP pathway; LL-2,6-diaminopimelate from (S)-tetrahydrodipicolinate (acetylase route): step 3/3. Its function is as follows. Catalyzes the conversion of N-acetyl-diaminopimelate to diaminopimelate and acetate. This Limosilactobacillus reuteri (strain DSM 20016) (Lactobacillus reuteri) protein is N-acetyldiaminopimelate deacetylase.